Reading from the N-terminus, the 879-residue chain is Alanine--tRNA ligase (879 aa).

Residues H566, H570, C668, and H672 each contribute to the Zn(2+) site.

Belongs to the class-II aminoacyl-tRNA synthetase family. The cofactor is Zn(2+).

The protein resides in the cytoplasm. The enzyme catalyses tRNA(Ala) + L-alanine + ATP = L-alanyl-tRNA(Ala) + AMP + diphosphate. Functionally, catalyzes the attachment of alanine to tRNA(Ala) in a two-step reaction: alanine is first activated by ATP to form Ala-AMP and then transferred to the acceptor end of tRNA(Ala). Also edits incorrectly charged Ser-tRNA(Ala) and Gly-tRNA(Ala) via its editing domain. This is Alanine--tRNA ligase from Listeria welshimeri serovar 6b (strain ATCC 35897 / DSM 20650 / CCUG 15529 / CIP 8149 / NCTC 11857 / SLCC 5334 / V8).